We begin with the raw amino-acid sequence, 640 residues long: Lysophospholipase (640 aa).

Residues 1-25 (MWFLNSVNLLFLVCSVALHLDAVNA) form the signal peptide. The PLA2c domain occupies 38-589 (DCDENINLVR…EKYCWNGTVD (552 aa)). N-linked (GlcNAc...) asparagine glycosylation is found at Asn84, Asn126, Asn163, Asn173, Asn218, Asn280, Asn310, Asn317, Asn348, Asn391, Asn492, Asn516, Asn544, Asn568, and Asn585. Over residues 594-610 (ISSTTSSSASSTSTSDS) the composition is skewed to low complexity. A disordered region spans residues 594-616 (ISSTTSSSASSTSTSDSGNKENS).

This sequence belongs to the lysophospholipase family. Post-translationally, highly glycosylated.

It localises to the secreted. The catalysed reaction is a 1-acyl-sn-glycero-3-phosphocholine + H2O = sn-glycerol 3-phosphocholine + a fatty acid + H(+). Its function is as follows. Catalyzes the release of fatty acids from lysophospholipids. At acidic pH the enzyme hydrolyzes all phospholipid substrates without metal ion. On the other hand, at alkaline pH the enzyme shows substrate specificity for phosphatidylcholine and lysophosphatidylcholine and requires Ca(2+), Fe(3+), or Al(3+) for the activity. This chain is Lysophospholipase (PLB), found in Kluyveromyces lactis (strain ATCC 8585 / CBS 2359 / DSM 70799 / NBRC 1267 / NRRL Y-1140 / WM37) (Yeast).